The sequence spans 161 residues: Anaerobic nitrite reductase HB2 (161 aa).

The region spanning 5–154 is the Globin domain; sequence VFTEKQEALV…LALAIKAEMK (150 aa). Residues 38–42 carry the Homodimerization motif; the sequence is EIAPA. Heme b-binding residues include S48, K62, H66, and H101. Residues 108 to 120 carry the Homodimerization motif; it reads DPHFEVVKEALVR.

The protein belongs to the plant globin family. As to quaternary structure, homodimer. It depends on heme b as a cofactor.

Its subcellular location is the cytoplasm. It localises to the nucleus. The catalysed reaction is Fe(III)-heme b-[protein] + nitric oxide + H2O = Fe(II)-heme b-[protein] + nitrite + 2 H(+). Functionally, phytoglobin that reduces nitrite to nitric oxide (NO) under anoxic conditions (e.g. during flooding or in waterlogged soil). May not function as an oxygen storage or transport protein. Has an unusually high affinity for O(2) through an hexacoordinate heme iron because of a very low dissociation constant. In Brassica napus (Rape), this protein is Anaerobic nitrite reductase HB2.